The sequence spans 275 residues: Nitrate import permease protein NrtB (275 aa).

Helical transmembrane passes span 25 to 45, 89 to 109, 120 to 140, 147 to 167, 189 to 209, 213 to 233, and 238 to 258; these read VIRP…LCSG, VAVG…LIGS, IFQV…LAAL, AIFV…TVGA, FFNI…RIGI, WLAI…FFIW, and SSLI…GLLL. The ABC transmembrane type-1 domain maps to 82-262; that stretch reads IFASLTRVAV…IVGLLLDRFI (181 aa).

This sequence belongs to the binding-protein-dependent transport system permease family. CysTW subfamily. The complex is composed of two ATP-binding proteins (NrtC and NrtD), two transmembrane proteins (NrtB) and a solute-binding protein (NrtA).

The protein resides in the cell inner membrane. Its function is as follows. Part of the ABC transporter complex NrtABCD involved in nitrate uptake. The complex is probably also involved in nitrite transport. Probably responsible for the translocation of the substrate across the membrane. The polypeptide is Nitrate import permease protein NrtB (nrtB) (Synechocystis sp. (strain ATCC 27184 / PCC 6803 / Kazusa)).